A 463-amino-acid chain; its full sequence is Fumarate hydratase class II (463 aa).

Residues 98–100 (SGT), 129–132 (HPND), 139–141 (SSN), and threonine 187 contribute to the substrate site. Histidine 188 acts as the Proton donor/acceptor in catalysis. Serine 318 is a catalytic residue. Substrate is bound by residues serine 319 and 324-326 (KVN).

Belongs to the class-II fumarase/aspartase family. Fumarase subfamily. As to quaternary structure, homotetramer.

It is found in the cytoplasm. It catalyses the reaction (S)-malate = fumarate + H2O. The protein operates within carbohydrate metabolism; tricarboxylic acid cycle; (S)-malate from fumarate: step 1/1. Its function is as follows. Involved in the TCA cycle. Catalyzes the stereospecific interconversion of fumarate to L-malate. The chain is Fumarate hydratase class II from Caulobacter vibrioides (strain ATCC 19089 / CIP 103742 / CB 15) (Caulobacter crescentus).